A 363-amino-acid chain; its full sequence is MMKRKILAAVIPALLAAATANAAEIYNKDGNKLDLYGKAVGRHVWTTTGDSKNADQTYAQIGFKGETQINTDLTGFGQWEYRTKADRAEGEQQNSNLVRLAFAGLKYAEVGSIDYGRNYGIVYDVESYTDMAPYFSGETWGGAYTDNYMTSRAGGLLTYRNSDFFGLVDGLSFGIQYQGKNQDNHSINSQNGDGVGYTMAYEFDGFGVTAAYSNSKRTNDQQDRDGNGDRAESWAVGAKYDANNVYLAAVYAETRNMSIVENTVTDTVEMANKTQNLEVVAQYQFDFGLRPAISYVQSKGKQLNGAGGSADLAKYIQAGATYYFNKNMNVWVDYRFNLLDENDYSSSYVGTDDQAAVGITYQF.

Residues 1-22 (MMKRKILAAVIPALLAAATANA) form the signal peptide.

Belongs to the Gram-negative porin family. Homotrimer. Forms mixed heterotrimers with OmpC and with PhoE; other mixed heterotrimers with other porins are also probable.

Its subcellular location is the cell outer membrane. Functionally, forms pores that allow passive diffusion of small molecules across the outer membrane. The chain is Outer membrane porin F from Salmonella typhimurium (strain SL1344).